A 265-amino-acid chain; its full sequence is MATTNSLHHHHHSSPSYTHHRNNLHCQSHFGPTSLSLKQPTSAATFSLICSASSTSSSTTAVSAVSTTNASATTAETATIFDVLENHLVNQNFRQADEETRRLLIQISGEAAVKRGYVFFSEVKTISPEDLQAIDNLWIKHSDGRFGYSVQRKIWLKVKKDFTRFFVKVEWMKLLDTEVVQYNYRAFPDEFKWELNDETPLGHLPLTNALRGTQLLKCVLSHPAFATADDNSGETEDELNRGVAVAKEQAGVGADKRVFKTNYSF.

Positions 1 to 24 are disordered; sequence MATTNSLHHHHHSSPSYTHHRNNL. The transit peptide at 1–69 directs the protein to the chloroplast; that stretch reads MATTNSLHHH…TAVSAVSTTN (69 aa). Residues 7–23 are compositionally biased toward basic residues; it reads LHHHHHSSPSYTHHRNN.

In terms of assembly, interacts with CHLH, the protoporphyrin IX-binding subunit of Mg-chelatase. Monomer or extremely compact dimer.

It is found in the plastid. Its subcellular location is the chloroplast membrane. Functionally, regulates chlorophyll synthesis and plastid-to-nucleus signal transduction by binding both the product and the substrate of Mg-chelatase, an enzyme that produces magnesium-protoporphyrin IX (Mg-Proto). Also activates Mg-chelatase. Neither binds abscisic acid (ABA) nor is involved in ABA signaling. The protein is Tetrapyrrole-binding protein, chloroplastic (GUN4) of Arabidopsis thaliana (Mouse-ear cress).